The sequence spans 132 residues: Gamma-crystallin-5 (132 aa).

Residues 1-40 (ILYEQPSYRGHQYYLWKGEYPDFQRWMGFNDSIRSCRMSP) enclose the Beta/gamma crystallin 'Greek key' 2 domain. Residues 41–45 (YHQGQ) form a connecting peptide region. 2 Beta/gamma crystallin 'Greek key' domains span residues 46-86 (YKMR…NVFD) and 87-129 (GNWM…RRVH).

The protein belongs to the beta/gamma-crystallin family. Monomer.

Crystallins are the dominant structural components of the vertebrate eye lens. This is Gamma-crystallin-5 (cryg5) from Xenopus laevis (African clawed frog).